Consider the following 343-residue polypeptide: Protein RecA (343 aa).

It belongs to the RecA family.

Its subcellular location is the cytoplasm. Its function is as follows. Can catalyze the hydrolysis of ATP in the presence of single-stranded DNA, the ATP-dependent uptake of single-stranded DNA by duplex DNA, and the ATP-dependent hybridization of homologous single-stranded DNAs. It interacts with LexA causing its activation and leading to its autocatalytic cleavage. This is Protein RecA from Coxiella burnetii (strain RSA 493 / Nine Mile phase I).